The following is a 356-amino-acid chain: Phosphate acyltransferase (356 aa).

The protein belongs to the PlsX family. In terms of assembly, homodimer. Probably interacts with PlsY.

Its subcellular location is the cytoplasm. The enzyme catalyses a fatty acyl-[ACP] + phosphate = an acyl phosphate + holo-[ACP]. The protein operates within lipid metabolism; phospholipid metabolism. Functionally, catalyzes the reversible formation of acyl-phosphate (acyl-PO(4)) from acyl-[acyl-carrier-protein] (acyl-ACP). This enzyme utilizes acyl-ACP as fatty acyl donor, but not acyl-CoA. This Mesorhizobium japonicum (strain LMG 29417 / CECT 9101 / MAFF 303099) (Mesorhizobium loti (strain MAFF 303099)) protein is Phosphate acyltransferase.